A 627-amino-acid polypeptide reads, in one-letter code: Mitochondrial Rho GTPase 1 (627 aa).

The region spanning 1-169 (MATVRICVCG…FFLCQKAVTH (169 aa)) is the Miro 1 domain. The Cytoplasmic portion of the chain corresponds to 1-599 (MATVRICVCG…PRSNEEGPDR (599 aa)). GTP-binding positions include 10 to 17 (GDESTGKS), 58 to 62 (DTSAR), and 114 to 117 (NKSD). EF-hand domains lie at 185 to 220 (LCIN…CFDK) and 305 to 340 (AGYR…APGL). Residues Asp198, Asp200, Asp202, Tyr204, Glu209, Asp318, Asp320, Asp322, and Glu329 each contribute to the Ca(2+) site. Positions 420-584 (RNVVLCYVLG…FVAYADAATT (165 aa)) constitute a Miro 2 domain. Residues 429–436 (GASGAGKS), 465–469 (ELPGG), and 534–537 (LKAD) contribute to the GTP site. Residues 600-620 (TSLYIALGATACAGVAALTIW) form a helical; Anchor for type IV membrane protein membrane-spanning segment. Topologically, residues 621–627 (RRATNAL) are mitochondrial intermembrane.

It belongs to the mitochondrial Rho GTPase family.

The protein localises to the mitochondrion outer membrane. Mitochondrial GTPase involved in mitochondrial trafficking. Probably involved in control of anterograde transport of mitochondria and their subcellular distribution. The chain is Mitochondrial Rho GTPase 1 (GEM1) from Gibberella zeae (strain ATCC MYA-4620 / CBS 123657 / FGSC 9075 / NRRL 31084 / PH-1) (Wheat head blight fungus).